The sequence spans 982 residues: Chromosome partition protein Smc (982 aa).

Residue 33–40 (PNGSGKSN) participates in ATP binding. Coiled coils occupy residues 171 to 235 (RYTK…LVAD) and 263 to 377 (QLQL…NLNQ). In terms of domain architecture, SMC hinge spans 416-535 (TGLLNTLNTF…ASDLQAALKL (120 aa)). Coiled-coil stretches lie at residues 568 to 627 (LSLY…ERVN), 669 to 713 (AERD…RSQL), and 753 to 818 (IKLS…EIDE).

This sequence belongs to the SMC family. In terms of assembly, homodimer.

The protein resides in the cytoplasm. In terms of biological role, required for chromosome condensation and partitioning. This is Chromosome partition protein Smc from Mycoplasma pneumoniae (strain ATCC 29342 / M129 / Subtype 1) (Mycoplasmoides pneumoniae).